Here is a 146-residue protein sequence, read N- to C-terminus: Peptide methionine sulfoxide reductase MsrB (146 aa).

A MsrB domain is found at serine 6 to lysine 129. Cysteine 118 acts as the Nucleophile in catalysis.

The protein belongs to the MsrB Met sulfoxide reductase family.

It catalyses the reaction L-methionyl-[protein] + [thioredoxin]-disulfide + H2O = L-methionyl-(R)-S-oxide-[protein] + [thioredoxin]-dithiol. The protein is Peptide methionine sulfoxide reductase MsrB of Brucella melitensis biotype 1 (strain ATCC 23456 / CCUG 17765 / NCTC 10094 / 16M).